Reading from the N-terminus, the 272-residue chain is Large ribosomal subunit protein uL2cz/uL2cy (272 aa).

The segment covering 1 to 13 has biased composition (polar residues); that stretch reads MHLYKTSTPSTRN. Disordered stretches follow at residues 1 to 27 and 222 to 272; these read MHLYKTSTPSTRNGAVDSQVKSNPRNN and NPVD…RRSK.

Belongs to the universal ribosomal protein uL2 family. Part of the 50S ribosomal subunit.

Its subcellular location is the plastid. The protein resides in the chloroplast. The polypeptide is Large ribosomal subunit protein uL2cz/uL2cy (rpl2-A) (Buxus microphylla (Littleleaf boxwood)).